Reading from the N-terminus, the 302-residue chain is CFYEIVDDYLRLFHDKEGRIMYDQMSDMRNRYIDMDGRMTFGTVGGYAVQSRGDGGYYVKSRGDGGYPVQGRGDTGYSSQTRSDDACLGQGRGEVDTGMSYDASTGVCTDINRGDMSSDINSGLYSGGRMDDSCHTSESRRMDDPCGTDESRRLDVPCHSDDHYRSDNPCTDDSCQAEDRRGGHSDSHRIDISSEESASRRSRNHAFAEGRMSEMRLRYMETCRRVLPFMERTLEMQHGGDTFFCGDEMMLCDMMCYCALENPLMENASFFGQYPKLMALRERVASQINISQYIKRRYQSDF.

Repeat copies occupy residues 45–54 (GGYAVQSRGD), 55–64 (GGYYVKSRGD), and 65–74 (GGYPVQGRGD). The tract at residues 45 to 84 (GGYAVQSRGDGGYYVKSRGDGGYPVQGRGDTGYSSQTRSD) is 4 X approximate tandem repeats of G-G-Y-[AYP]-V-[QK]-[SG]-R-G-D. 3 short sequence motifs (cell attachment site) span residues 52-54 (RGD), 62-64 (RGD), and 72-74 (RGD). Residues 68-92 (PVQGRGDTGYSSQTRSDDACLGQGR) form a disordered region. The stretch at 75-84 (TGYSSQTRSD) is one 4; approximate repeat. The short motif at 113–115 (RGD) is the Cell attachment site element. A disordered region spans residues 118 to 205 (SDINSGLYSG…ESASRRSRNH (88 aa)). 2 stretches are compositionally biased toward basic and acidic residues: residues 129-166 (RMDD…HYRS) and 177-192 (AEDR…RIDI). The GST C-terminal domain maps to 183–302 (GHSDSHRIDI…YIKRRYQSDF (120 aa)).

This sequence belongs to the GST superfamily.

Functionally, S-crystallins are structural components of squids and octopi eye lens. This Nototodarus sloanii (Wellington flying squid) protein is S-crystallin SL4.